Consider the following 60-residue polypeptide: Metallothionein (60 aa).

Position 1 is an N-acetylmethionine (Met1). A beta region spans residues 1–28 (MDPCECSKTGTCNCGGSCTCKNCSCTTC). Residues Cys4, Cys6, Cys12, Cys14, Cys18, Cys20, Cys23, Cys25, Cys28, Cys32, Cys33, Cys35, Cys36, Cys40, Cys43, Cys47, Cys49, Cys54, Cys58, and Cys59 each contribute to the a divalent metal cation site. An alpha region spans residues 29-60 (NKSCCPCCPSGCPKCASGCVCKGKTCDTSCCQ).

The protein belongs to the metallothionein superfamily. Type 1 family.

Functionally, metallothioneins have a high content of cysteine residues that bind various heavy metals. In Pleuronectes platessa (European plaice), this protein is Metallothionein (mt).